We begin with the raw amino-acid sequence, 333 residues long: MEDLYLSWPKWFSEALARYSSLEGALEGVEEIYYCGMGGSGAAGDYIEALLSIYAPQGPEFRVVKDFRPPRPPRHRGYGLVLASYSGNTLETVECGSLLSPAAGRVVAVTSGGRLLEMAKERGWLVARLPGGILPRVSFPWMLAASTAMLSGALGVDLEALKRLAGGLDTQGLKGEAERLAGFISRYRIASLVTCGPGIPLAVRLKNELAENAKMPSRLEIYPESSHNDIVALEAAEGLYGAVFIWIEHEGSLCPAVLDVVEGIYREYGVDTISIESSARGGPNATVAEYLSRTLVFGLASVRLALMRGFNPEETPPIDKYKRRLGEALRSQA.

The region spanning 22–160 (LEGALEGVEE…SGALGVDLEA (139 aa)) is the SIS domain. D-fructose 6-phosphate-binding residues include Gly-39, Ser-40, Ser-84, Ser-86, Thr-89, and Arg-136. Residue Glu-211 is the Proton acceptor of the active site. D-fructose 6-phosphate is bound by residues His-227 and Lys-322. Residue His-227 is the Proton donor of the active site. Lys-322 acts as the Proton acceptor in catalysis.

The protein belongs to the PGI/PMI family. Homodimer.

It carries out the reaction alpha-D-glucose 6-phosphate = beta-D-fructose 6-phosphate. The enzyme catalyses D-mannose 6-phosphate = D-fructose 6-phosphate. Inhibited by low concentrations of erythrose 4-phosphate and 6-phosphogluconate. Dual specificity isomerase that catalyzes the isomerization of both glucose-6-phosphate and mannose-6-phosphate to fructose-6-phosphate with similar catalytic efficiency. The chain is Bifunctional phosphoglucose/phosphomannose isomerase from Aeropyrum pernix (strain ATCC 700893 / DSM 11879 / JCM 9820 / NBRC 100138 / K1).